Consider the following 1227-residue polypeptide: Splicing factor 3B subunit 3 (1227 aa).

Belongs to the RSE1 family. As to quaternary structure, identified in the spliceosome A complex; remains associated with the spliceosome throughout the splicing process. Component of the spliceosome B complex. Identified in the spliceosome C complex. Identified in the spliceosome E complex. Component of the U11/U12 snRNPs that are part of the U12-type spliceosome. Component of splicing factor SF3B complex. Identified in the SAGA transcription regulatory histone acetylation (HAT) complex; the interaction is RNA-independent.

The protein localises to the nucleus. In terms of biological role, involved in pre-mRNA splicing as a component of the splicing factor SF3B complex, a constituent of the spliceosome. SF3B complex is required for 'A' complex assembly formed by the stable binding of U2 snRNP to the branchpoint sequence (BPS) in pre-mRNA. Sequence independent binding of SF3A/SF3B complex upstream of the branch site is essential, it may anchor U2 snRNP to the pre-mRNA. May also be involved in the assembly of the 'E' complex. Also belongs to the minor U12-dependent spliceosome, which is involved in the splicing of rare class of nuclear pre-mRNA intron. The polypeptide is Splicing factor 3B subunit 3 (Drosophila melanogaster (Fruit fly)).